The chain runs to 2551 residues: Probable polyketide synthase 13 (2551 aa).

Residues 10-434 form the Ketosynthase family 3 (KS3) domain; the sequence is ENDVAIIGIG…GSNCCLILSQ (425 aa). Residues cysteine 176, histidine 317, and histidine 358 each act as for beta-ketoacyl synthase activity in the active site. An acyl/malonyl transferase region spans residues 621 to 654; it reads GIEVSFIIGHSLGEIPAAYCSGMINIDTLCYLIY. The For acyl/malonyl transferase activity role is filled by serine 631. An N-terminal hotdog fold region spans residues 928 to 1057; it reads TDNLGYLNEN…GDFQLSNHSS (130 aa). The 299-residue stretch at 928–1226 folds into the PKS/mFAS DH domain; that stretch reads TDNLGYLNEN…CTSLTPIKES (299 aa). Histidine 961 acts as the Proton acceptor; for dehydratase activity in catalysis. Positions 1076-1226 are C-terminal hotdog fold; it reads NLTKLSRDEL…CTSLTPIKES (151 aa). Aspartate 1136 (proton donor; for dehydratase activity) is an active-site residue. The 78-residue stretch at 2465 to 2542 folds into the Carrier domain; the sequence is DCQTIIKDSF…SSIQYTINSF (78 aa). Position 2502 is an O-(pantetheine 4'-phosphoryl)serine (serine 2502).

Requires pantetheine 4'-phosphate as cofactor.

Functionally, probable polyketide synthase. This chain is Probable polyketide synthase 13 (pks13), found in Dictyostelium discoideum (Social amoeba).